Reading from the N-terminus, the 332-residue chain is Opticin (332 aa).

The first 19 residues, 1–19 (MRLLAFLSLLALVLQETGT), serve as a signal peptide directing secretion. Residues 21–41 (SLPRKERKRREEQMPREGDSF) are disordered. A compositionally biased stretch (basic and acidic residues) spans 29–39 (RREEQMPREGD). Tyr-65 and Tyr-71 each carry sulfotyrosine. The segment at 86-106 (ATSISPAKSTTAPGTPSSNPT) is disordered. The LRRNT domain occupies 116–153 (LLSSQPNHGLPTCLVCVCLGSSVYCDDIDLEDIPPLPR). The residue at position 139 (Tyr-139) is a Sulfotyrosine. LRR repeat units lie at residues 154 to 175 (RTAYLYARFNRISRIRAEDFKG), 178 to 199 (KLKRIDLSNNLISSIDNDAFRL), 202 to 223 (ALQDLILPENQLEALPVLPSGI), 248 to 269 (KLQFLYLSDNLLDSIPGPLPLS), 270 to 290 (LRSVHLQNNLIETMQRDVFCD), and 300 to 320 (QLEDIRLDGNPINLSLFPSAY). Cys-289 and Cys-322 are disulfide-bonded. Residue Asn-312 is glycosylated (N-linked (GlcNAc...) asparagine).

This sequence belongs to the small leucine-rich proteoglycan (SLRP) family. SLRP class III subfamily. In terms of assembly, homodimer. In terms of processing, O-glycosylated. Proteolytically cleaved by MMP1, MMP2, MMP3, MMP7, MMP8, MMP9, ADAMTS4, and ADAMTS5. Proteolytically cleaved by MMP13. The degradation of OPTC by proteases may contribute to osteoarthritis pathophysiology. Post-translationally, sulfated on tyrosine residues. Expressed in cartilage and synovial membranes (at protein level). Expressed in the retina, iris, ligament, skin and fetal liver (at protein level). Expressed in the retinal pigment epithelium (at protein level). Expressed in synovial fibroblasts and subchondral bone osteoblasts.

The protein localises to the secreted. It localises to the extracellular space. It is found in the extracellular matrix. Its function is as follows. Inhibits angiogenesis in the vitreous humor of the eye, and therefore represses neovascularization. Binds collagen fibrils. May be involved in collagen fiber organization via regulation of other members of the small leucine-rich repeat proteoglycan superfamily. The chain is Opticin (OPTC) from Homo sapiens (Human).